The primary structure comprises 872 residues: MKILKTLTLRGPNYWSIRRKKLIVMRLDLEDLADKPSNEIPGFYDGLVEVLPSLVEHYCSPGHRGGFLERVKEGTYMGHIVEHVALELQELTKMPVGFGRTRETATPGIYNVVFEYVDEQAGRYAGRAAVRLCRSIVDTGTYPLKELEQDLSDLQDLQANASLGPSTQTLVTEAEARNIPWMALSARAMVQLGYGVHQKRIQATLSNYSGILAVELACDKEGTKTILQDAGVPVPRGTTIQFFEELESAIDDVGGYPIVIKPLDGNHGRGITIDINSWKEAEEAYDLASEESKTRTVIVERFYKGSDHRLLVINGKLVAVAERVPAHVIGDDKHTIEELIDITNEDPRRGEGHDNVLTRIKVDKTVLGMLDKQGLRLDSILDKGEIVYLRATANLSTGGSAIDRTDDIHPENLWMAERVAKIIGLDIMGIDVVTPDITKPLRDVDGVIVEVNAAPGFRMHVAPSQGLSRNVAAPVMDMLFPPESPSRVPIVAITGTNGKTTTTRLTAHIYRQTGKVVGYTSTDGVYIGEYLVEKGDNTGPFSAGMILKDPTVEVAVLESARGGILRSGLAFDTCDVGIVLNVAADHLGLGDINTIEQMARVKGVVAEVVHADGYAVLNADDPLVAAMAEQVKGKVAYFSMNPDNEIIHNHTRRDGMAAVYENGYISILEGQFTLRIEEAVNVPMTMGGMAPFMIANALAACLAAFCQGVDIEDIRQGVRTFKASANQTPGRMNLFNLGDYHALVDYAHNPAGYEAVGEFVKNWKGQRLGVVGGPGDRRDEDLILLGKIAARVFDRILVKEDDDKRGRARGEAADLIIDGILSENDKADYEAILDETEAIEYGLDKVDKGGLVVIFPESVTRAISLINRRNPI.

Residues 224–480 (KTILQDAGVP…VAAPVMDMLF (257 aa)) form the ATP-grasp domain. 495–501 (GTNGKTT) contributes to the ATP binding site.

It in the C-terminal section; belongs to the MurCDEF family. Homodimer.

It carries out the reaction [L-4-(L-arginin-2-N-yl)aspartate](n) + L-aspartate + ATP = [L-4-(L-arginin-2-N-yl)aspartate](n)-L-aspartate + ADP + phosphate + H(+). It catalyses the reaction [L-4-(L-arginin-2-N-yl)aspartate](n)-L-aspartate + L-arginine + ATP = [L-4-(L-arginin-2-N-yl)aspartate](n+1) + ADP + phosphate + H(+). In terms of biological role, catalyzes the ATP-dependent polymerization of arginine and aspartate to multi-L-arginyl-poly-L-aspartic acid (cyanophycin; a water-insoluble reserve polymer). The protein is Cyanophycin synthetase (cphA) of Crocosphaera subtropica (strain ATCC 51142 / BH68) (Cyanothece sp. (strain ATCC 51142)).